The primary structure comprises 553 residues: ATP synthase F(1) complex subunit alpha, mitochondrial (553 aa).

Residues 1 to 43 (MLSVRVAAAVARALPRRAGLVSKNALGSSFIAARNLHASNSRL) constitute a mitochondrion transit peptide. A Pyrrolidone carboxylic acid modification is found at Gln-44. A phosphoserine mark is found at Ser-53 and Ser-65. Ser-76 bears the Phosphoserine; alternate mark. An O-linked (GlcNAc) serine; alternate glycan is attached at Ser-76. Phosphoserine is present on Ser-106. 3 positions are modified to N6-acetyllysine: Lys-123, Lys-126, and Lys-132. Residue Thr-134 is modified to Phosphothreonine. The residue at position 161 (Lys-161) is an N6-acetyllysine; alternate. The residue at position 161 (Lys-161) is an N6-succinyllysine; alternate. The residue at position 166 (Ser-166) is a Phosphoserine. Position 167 is an N6-acetyllysine; alternate (Lys-167). At Lys-167 the chain carries N6-succinyllysine; alternate. Ser-184 is subject to Phosphoserine. At Arg-204 the chain carries Omega-N-methylarginine. ATP contacts are provided by Gln-215, Gly-217, Lys-218, Thr-219, and Ser-220. Mg(2+) is bound at residue Thr-219. N6-acetyllysine; alternate is present on residues Lys-230 and Lys-239. An N6-succinyllysine; alternate mark is found at Lys-230 and Lys-239. N6-acetyllysine is present on Lys-240. An N6-acetyllysine; alternate mark is found at Lys-261 and Lys-305. Lys-261 and Lys-305 each carry N6-succinyllysine; alternate. Asp-312 provides a ligand contact to Mg(2+). N6-acetyllysine; alternate is present on Lys-427. Lys-427 is subject to N6-succinyllysine; alternate. Lys-434 bears the N6-acetyllysine mark. ATP-binding residues include Gln-473 and Gln-475. An N6-acetyllysine; alternate mark is found at Lys-498, Lys-506, Lys-531, and Lys-539. N6-succinyllysine; alternate occurs at positions 498, 506, 531, and 539. Position 541 is an N6-acetyllysine (Lys-541).

Belongs to the ATPase alpha/beta chains family. As to quaternary structure, homotrimer. Component of the ATP synthase complex composed at least of ATP5F1A/subunit alpha, ATP5F1B/subunit beta, ATP5MC1/subunit c (homooctomer), MT-ATP6/subunit a, MT-ATP8/subunit 8, ATP5ME/subunit e, ATP5MF/subunit f, ATP5MG/subunit g, ATP5MK/subunit k, ATP5MJ/subunit j, ATP5F1C/subunit gamma, ATP5F1D/subunit delta, ATP5F1E/subunit epsilon, ATP5PF/subunit F6, ATP5PB/subunit b, ATP5PD/subunit d, ATP5PO/subunit OSCP. ATP synthase complex consists of a soluble F(1) head domain (subunits alpha(3) and beta(3)) - the catalytic core - and a membrane F(0) domain - the membrane proton channel (subunits c, a, 8, e, f, g, k and j). These two domains are linked by a central stalk (subunits gamma, delta, and epsilon) rotating inside the F1 region and a stationary peripheral stalk (subunits F6, b, d, and OSCP). Interacts with ATPAF2. Interacts with HRG; the interaction occurs on the surface of T-cells and alters the cell morphology when associated with concanavalin (in vitro). Interacts with PLG (angiostatin peptide); the interaction inhibits most of the angiogenic properties of angiostatin. Interacts with BLOC1S1. Interacts with BCL2L1 isoform BCL-X(L); the interaction mediates the association of BCL2L1 isoform BCL-X(L) with the mitochondrial membrane F(1)F(0) ATP synthase and enhances neurons metabolic efficiency. Interacts with CLN5 and PPT1. Interacts with S100A1; this interaction increases F1-ATPase activity. Interacts with ABCB7; this interaction allows the regulation of cellular iron homeostasis and cellular reactive oxygen species (ROS) levels in cardiomyocytes. In terms of processing, acetylated on lysine residues. BLOC1S1 is required for acetylation. Heart muscle (at protein level). Heart and liver.

It localises to the mitochondrion inner membrane. The protein localises to the cell membrane. Functionally, subunit alpha, of the mitochondrial membrane ATP synthase complex (F(1)F(0) ATP synthase or Complex V) that produces ATP from ADP in the presence of a proton gradient across the membrane which is generated by electron transport complexes of the respiratory chain. ATP synthase complex consist of a soluble F(1) head domain - the catalytic core - and a membrane F(1) domain - the membrane proton channel. These two domains are linked by a central stalk rotating inside the F(1) region and a stationary peripheral stalk. During catalysis, ATP synthesis in the catalytic domain of F(1) is coupled via a rotary mechanism of the central stalk subunits to proton translocation. In vivo, can only synthesize ATP although its ATP hydrolase activity can be activated artificially in vitro. With the catalytic subunit beta (ATP5F1B), forms the catalytic core in the F(1) domain. Subunit alpha does not bear the catalytic high-affinity ATP-binding sites. The chain is ATP synthase F(1) complex subunit alpha, mitochondrial from Bos taurus (Bovine).